The chain runs to 294 residues: MTATVSHAGPQVVILTGVSGSGKSTALRALEDAGFYCVDNLPIVFLEKLLELSGHTAGEVSRMALVVDAREGRFLVEAPRIIRELRQKGADVEVLFLDASDEALVRRYSETRRRHPLAGEGGTVPDGIAAERLALADVRGIADEVIDTTTLNVHELKRLVTRRFVAGEGAKLGVTLVSFGFRFGIPTHADLVLDVRFLPNPFFVPELKPHPGTDPRVAEFVLGQADAKAFLERLTDLLGFLLPRYRNEGKSYLTIAIGCTGGKHRSVALAAALAERLEGSGQPVRLWHRDVEKE.

17 to 24 is an ATP binding site; it reads GVSGSGKS. 68-71 is a GTP binding site; it reads DARE.

Belongs to the RapZ-like family.

Its function is as follows. Displays ATPase and GTPase activities. The protein is Nucleotide-binding protein A2cp1_0165 of Anaeromyxobacter dehalogenans (strain 2CP-1 / ATCC BAA-258).